A 235-amino-acid polypeptide reads, in one-letter code: Small ribosomal subunit protein eS4 (235 aa).

The S4 RNA-binding domain maps to 37-110 (LPLGLIIRDV…KGRLVLYKLN (74 aa)).

The protein belongs to the eukaryotic ribosomal protein eS4 family.

In Methanosarcina mazei (strain ATCC BAA-159 / DSM 3647 / Goe1 / Go1 / JCM 11833 / OCM 88) (Methanosarcina frisia), this protein is Small ribosomal subunit protein eS4.